The primary structure comprises 146 residues: Large ribosomal subunit protein uL15 (146 aa).

Basic residues-rich tracts occupy residues 1–13 (MIRK…RMRG) and 22–38 (SKKR…GQAG). The tract at residues 1 to 38 (MIRKRRKITRMRGSRTVGGGCSKKRRGAGHRGGRGQAG) is disordered.

It belongs to the universal ribosomal protein uL15 family. In terms of assembly, part of the 50S ribosomal subunit.

Functionally, binds to the 23S rRNA. This chain is Large ribosomal subunit protein uL15, found in Methanothermobacter thermautotrophicus (strain ATCC 29096 / DSM 1053 / JCM 10044 / NBRC 100330 / Delta H) (Methanobacterium thermoautotrophicum).